The following is a 517-amino-acid chain: Alpha,alpha-trehalose-phosphate synthase [UDP-forming] 1 (517 aa).

Residues tyrosine 98 and aspartate 152 each coordinate D-glucose 6-phosphate. UDP is bound by residues arginine 288 and lysine 293. UDP-alpha-D-glucose is bound by residues arginine 288 and lysine 293. Arginine 326 lines the D-glucose 6-phosphate pocket. 387–395 (DGMNLVAYE) contributes to the UDP-alpha-D-glucose binding site. Residue 391 to 395 (LVAYE) participates in UDP binding. The disordered stretch occupies residues 486–517 (FHAKKASFSDNNSENGEPSNGVETPAQEQVAQ). A compositionally biased stretch (polar residues) spans 493–517 (FSDNNSENGEPSNGVETPAQEQVAQ).

This sequence belongs to the glycosyltransferase 20 family.

It carries out the reaction D-glucose 6-phosphate + UDP-alpha-D-glucose = alpha,alpha-trehalose 6-phosphate + UDP + H(+). It participates in carbohydrate biosynthesis. Its function is as follows. Synthase catalytic subunit of the trehalose synthase complex that catalyzes the production of trehalose from glucose-6-phosphate and UDP-alpha-D-glucose in a two step process. This is Alpha,alpha-trehalose-phosphate synthase [UDP-forming] 1 from Aspergillus niger.